Reading from the N-terminus, the 111-residue chain is MESSAKLSSVRLSPRKTRLVVDLVRGKGIQTALNTLRFSPQPSAKLISKLLSSAVANAEQKGCSDVDKLFVKTIFVDGGAVLKRFTPRAMGRASKIRKPTSHITVVLAEKK.

This sequence belongs to the universal ribosomal protein uL22 family. As to quaternary structure, part of the 50S ribosomal subunit.

In terms of biological role, this protein binds specifically to 23S rRNA; its binding is stimulated by other ribosomal proteins, e.g. L4, L17, and L20. It is important during the early stages of 50S assembly. It makes multiple contacts with different domains of the 23S rRNA in the assembled 50S subunit and ribosome. The globular domain of the protein is located near the polypeptide exit tunnel on the outside of the subunit, while an extended beta-hairpin is found that lines the wall of the exit tunnel in the center of the 70S ribosome. In Citrifermentans bemidjiense (strain ATCC BAA-1014 / DSM 16622 / JCM 12645 / Bem) (Geobacter bemidjiensis), this protein is Large ribosomal subunit protein uL22.